We begin with the raw amino-acid sequence, 79 residues long: Short neurotoxin 6 (79 aa).

The N-terminal stretch at M1–T21 is a signal peptide. 4 disulfide bridges follow: C24–C41, C34–C59, C63–C71, and C72–C77.

This sequence belongs to the three-finger toxin family. Short-chain subfamily. Type III alpha-neurotoxin sub-subfamily. Expressed by the venom gland.

Its subcellular location is the secreted. Its function is as follows. Binds with high affinity to muscle nicotinic acetylcholine receptor (nAChR) and hinders acetylcholine binding to the receptor, thereby impairing neuromuscular transmission. Competes with the binding of alpha-bungarotoxin on muscle AChR (from Torpedo) with an IC(50) of 0.18 uM. Causes muscle paralysis, spasms and increased respiration. The sequence is that of Short neurotoxin 6 from Pseudonaja textilis (Eastern brown snake).